The chain runs to 892 residues: Isoleucine--tRNA ligase (892 aa).

The short motif at 60–70 (PYANGSIHIGH) is the 'HIGH' region element. Glu-552 contacts L-isoleucyl-5'-AMP. The short motif at 593–597 (KMSKS) is the 'KMSKS' region element. Lys-596 provides a ligand contact to ATP. Residues Cys-862, Cys-865, Cys-879, and Cys-882 each coordinate Zn(2+).

This sequence belongs to the class-I aminoacyl-tRNA synthetase family. IleS type 1 subfamily. As to quaternary structure, monomer. It depends on Zn(2+) as a cofactor.

The protein resides in the cytoplasm. The catalysed reaction is tRNA(Ile) + L-isoleucine + ATP = L-isoleucyl-tRNA(Ile) + AMP + diphosphate. Its function is as follows. Catalyzes the attachment of isoleucine to tRNA(Ile). As IleRS can inadvertently accommodate and process structurally similar amino acids such as valine, to avoid such errors it has two additional distinct tRNA(Ile)-dependent editing activities. One activity is designated as 'pretransfer' editing and involves the hydrolysis of activated Val-AMP. The other activity is designated 'posttransfer' editing and involves deacylation of mischarged Val-tRNA(Ile). This chain is Isoleucine--tRNA ligase, found in Mycoplasmopsis agalactiae (strain NCTC 10123 / CIP 59.7 / PG2) (Mycoplasma agalactiae).